Consider the following 431-residue polypeptide: Adenylosuccinate synthetase (431 aa).

Residues 12-18 (GDEGKGK) and 40-42 (GHT) each bind GTP. D13 functions as the Proton acceptor in the catalytic mechanism. 2 residues coordinate Mg(2+): D13 and G40. IMP contacts are provided by residues 13–16 (DEGK), 38–41 (NAGH), T131, R145, Q225, T240, and R304. H41 serves as the catalytic Proton donor. 300–306 (TTTGRKR) contributes to the substrate binding site. Residues R306, 332–334 (KLD), and 414–416 (STS) each bind GTP.

This sequence belongs to the adenylosuccinate synthetase family. As to quaternary structure, homodimer. Mg(2+) serves as cofactor.

Its subcellular location is the cytoplasm. The catalysed reaction is IMP + L-aspartate + GTP = N(6)-(1,2-dicarboxyethyl)-AMP + GDP + phosphate + 2 H(+). Its pathway is purine metabolism; AMP biosynthesis via de novo pathway; AMP from IMP: step 1/2. Its function is as follows. Plays an important role in the de novo pathway of purine nucleotide biosynthesis. Catalyzes the first committed step in the biosynthesis of AMP from IMP. In Jannaschia sp. (strain CCS1), this protein is Adenylosuccinate synthetase.